A 291-amino-acid chain; its full sequence is MELPSWIRVKAGDYGRIVAVREAVFAAGVHTICEEAHCPNIFSCWGEGTATFLILGDVCTRACKFCAVKTGDPRGFVDPTEPARVAEAVAKLGLRYVVITSVDRDDLPDGGASQFASVVKAVKARAPWAKVEVLTPDFGGSAEAVASVVEAGPDVYAHNLETVRRLTPLVRDRRASYDVSLRVLKMAKELGAVTKSGLMVGLGETFDEVLEALSDLRRVDVDIVTIGQYLKPRGHKRFLEVQRWVPPEEFEKYREAAEAMGFKAVVAGPLVRSSYKAHEAYLEMLRKTIGR.

Positions 33, 38, 44, 59, 63, 66, and 274 each coordinate [4Fe-4S] cluster. A Radical SAM core domain is found at 45-263 (WGEGTATFLI…REAAEAMGFK (219 aa)).

The protein belongs to the radical SAM superfamily. Lipoyl synthase family. [4Fe-4S] cluster serves as cofactor.

The protein localises to the cytoplasm. The catalysed reaction is [[Fe-S] cluster scaffold protein carrying a second [4Fe-4S](2+) cluster] + N(6)-octanoyl-L-lysyl-[protein] + 2 oxidized [2Fe-2S]-[ferredoxin] + 2 S-adenosyl-L-methionine + 4 H(+) = [[Fe-S] cluster scaffold protein] + N(6)-[(R)-dihydrolipoyl]-L-lysyl-[protein] + 4 Fe(3+) + 2 hydrogen sulfide + 2 5'-deoxyadenosine + 2 L-methionine + 2 reduced [2Fe-2S]-[ferredoxin]. It functions in the pathway protein modification; protein lipoylation via endogenous pathway; protein N(6)-(lipoyl)lysine from octanoyl-[acyl-carrier-protein]: step 2/2. In terms of biological role, catalyzes the radical-mediated insertion of two sulfur atoms into the C-6 and C-8 positions of the octanoyl moiety bound to the lipoyl domains of lipoate-dependent enzymes, thereby converting the octanoylated domains into lipoylated derivatives. The protein is Lipoyl synthase of Pyrobaculum calidifontis (strain DSM 21063 / JCM 11548 / VA1).